The chain runs to 574 residues: Multidrug and toxin extrusion protein 1 (574 aa).

At 1 to 51 (MEGQAAETNHRAETVVRAELCLSAEQGPETTAYSQKRCLFLPMEVWQEAQQ) the chain is on the cytoplasmic side. The helical transmembrane segment at 52-72 (LLALAAPAFLSQLMIFLISIV) threads the bilayer. Residues 73–86 (SSIFCGHLGKVELD) are Extracellular-facing. A helical membrane pass occupies residues 87–107 (AVSLAITIINITGVAVGTGLA). At 108 to 133 (GACDTLISQTFGGSNLKLVGIILQRG) the chain is on the cytoplasmic side. The helical transmembrane segment at 134–154 (ILILLLFCFPCWALLINTESI) threads the bilayer. Over 155–168 (LLLFRQDPEVSKLT) the chain is Extracellular. A helical membrane pass occupies residues 169-189 (QIYVLIFLPALPAAFLYQLLA). Topologically, residues 190 to 204 (KYLQNQGIIYPQVLT) are cytoplasmic. A helical transmembrane segment spans residues 205 to 225 (GFIANIFNALFNYILLYVLGL). The Extracellular segment spans residues 226 to 230 (GVMGS). A helical transmembrane segment spans residues 231–251 (ACANTVSQFIQMILLFLYIVW). At 252 to 271 (RRLYADTWGGWSQACFEEWG) the chain is on the cytoplasmic side. A helical transmembrane segment spans residues 272–291 (AFIRLAVASMLMLCIEWWAF). Topologically, residues 292 to 309 (EISMFLAGVLGMVDLAAQ) are extracellular. A helical membrane pass occupies residues 310-330 (AIIYQVAIVVYLIPLGLCIAG). At 331 to 350 (SIRVGHGLGAGNTEQAKRSA) the chain is on the cytoplasmic side. The helical transmembrane segment at 351–371 (LVVLCMTELCALLSGILLATL) threads the bilayer. Topologically, residues 372-384 (KDVVAYIFTSDPN) are extracellular. The helical transmembrane segment at 385-405 (IVALVSYVLPVYSACLLFDAC) threads the bilayer. Residues 406–430 (VAACGGILRGSGKLKVGAISHTVGY) are Cytoplasmic-facing. A helical transmembrane segment spans residues 431–451 (YVIGLPLGISLMFAAKLGIIG). The Extracellular portion of the chain corresponds to 452 to 453 (FW). Residues 454-472 (FGILACGIAQSIFLIIFVF) traverse the membrane as a helical segment. Residues 473–549 (KIDWKRASEE…AGAAQHTRTL (77 aa)) lie on the Cytoplasmic side of the membrane. Positions 500 to 541 (KPSVYQEGCPTEQGDVDPGNVESIEFSQSSTSSEGTSPTPAG) are disordered. Residues 521–538 (ESIEFSQSSTSSEGTSPT) show a composition bias toward low complexity. Residues 550 to 570 (ILTRGLALGCAVGTLIIGIVI) form a helical membrane-spanning segment. Residues 571–574 (RLSV) are Extracellular-facing.

This sequence belongs to the multi antimicrobial extrusion (MATE) (TC 2.A.66.1) family.

The protein localises to the cell membrane. Its subcellular location is the apical cell membrane. The catalysed reaction is thiamine(out) + H(+)(in) = thiamine(in) + H(+)(out). The enzyme catalyses estrone 3-sulfate(in) + H(+)(out) = estrone 3-sulfate(out) + H(+)(in). It catalyses the reaction creatinine(in) + H(+)(out) = creatinine(out) + H(+)(in). It carries out the reaction agmatine(in) + H(+)(out) = agmatine(out) + H(+)(in). Multidrug efflux pump that functions as a H(+)/organic cation antiporter. Mediates the secretion of cationic compounds including drugs, toxins and endogenous metabolites. Plays a role physiological role in the excretion of drugs, toxins and endogenous metabolites through the kidney and liver, into urine and bile respectively. The sequence is that of Multidrug and toxin extrusion protein 1 (slc47a1) from Xenopus tropicalis (Western clawed frog).